A 162-amino-acid chain; its full sequence is NADH-quinone oxidoreductase subunit I (162 aa).

4Fe-4S ferredoxin-type domains follow at residues 52–82 (LRRYPNGEERCIACKLCEAICPAQAITIEAG) and 93–122 (TRYDIDMVKCIYCGFCQEACPVDAIVEGPN). The [4Fe-4S] cluster site is built by cysteine 62, cysteine 65, cysteine 68, cysteine 72, cysteine 102, cysteine 105, cysteine 108, and cysteine 112.

The protein belongs to the complex I 23 kDa subunit family. In terms of assembly, NDH-1 is composed of 14 different subunits. Subunits NuoA, H, J, K, L, M, N constitute the membrane sector of the complex. Requires [4Fe-4S] cluster as cofactor.

Its subcellular location is the cell inner membrane. It catalyses the reaction a quinone + NADH + 5 H(+)(in) = a quinol + NAD(+) + 4 H(+)(out). Its function is as follows. NDH-1 shuttles electrons from NADH, via FMN and iron-sulfur (Fe-S) centers, to quinones in the respiratory chain. The immediate electron acceptor for the enzyme in this species is believed to be ubiquinone. Couples the redox reaction to proton translocation (for every two electrons transferred, four hydrogen ions are translocated across the cytoplasmic membrane), and thus conserves the redox energy in a proton gradient. The sequence is that of NADH-quinone oxidoreductase subunit I from Methylocella silvestris (strain DSM 15510 / CIP 108128 / LMG 27833 / NCIMB 13906 / BL2).